The sequence spans 209 residues: Inorganic pyrophosphatase (209 aa).

The substrate site is built by Lys38, Arg52, and Tyr64. Residues Asp92, Asp97, and Asp130 each coordinate Mg(2+). Tyr167 contributes to the substrate binding site.

It belongs to the PPase family. Homohexamer. Mg(2+) is required as a cofactor.

It is found in the cytoplasm. The catalysed reaction is diphosphate + H2O = 2 phosphate + H(+). Catalyzes the hydrolysis of inorganic pyrophosphate (PPi) forming two phosphate ions. The protein is Inorganic pyrophosphatase of Chlamydia muridarum (strain MoPn / Nigg).